Reading from the N-terminus, the 77-residue chain is Probable Fe(2+)-trafficking protein (77 aa).

Belongs to the Fe(2+)-trafficking protein family. In terms of assembly, monomer.

Functionally, could be a mediator in iron transactions between iron acquisition and iron-requiring processes, such as synthesis and/or repair of Fe-S clusters in biosynthetic enzymes. This chain is Probable Fe(2+)-trafficking protein, found in Buchnera aphidicola subsp. Acyrthosiphon pisum (strain APS) (Acyrthosiphon pisum symbiotic bacterium).